The sequence spans 572 residues: Putative two-component response regulator ARR13 (572 aa).

The Response regulatory domain maps to 17-134 (NVMVVDDNRV…DLPKIYQFAL (118 aa)). Residue D71 is modified to 4-aspartylphosphate. The interval 175–225 (KKNCSSKSDTRTVNSTNVSHVSTNGSRKNRKRKPKGGPSDDGESLSQPPKK) is disordered. Residues 179–197 (SSKSDTRTVNSTNVSHVST) are compositionally biased toward polar residues. Positions 224-227 (KKKK) match the Nuclear localization signal motif. Positions 227-277 (KIWWTNPLQDLFLQAIQHIGYDKVVPKKILAIMNVPYLTRENVASHLQKYR) form a DNA-binding region, myb-like GARP. Polar residues predominate over residues 509 to 522 (NQDQSNGESSNTIA). Positions 509-531 (NQDQSNGESSNTIATPETNTPNF) are disordered.

It belongs to the ARR family. Type-B subfamily. As to quaternary structure, binds the target DNA as a monomer. Two-component system major event consists of a His-to-Asp phosphorelay between a sensor histidine kinase (HK) and a response regulator (RR). In plants, the His-to-Asp phosphorelay involves an additional intermediate named Histidine-containing phosphotransfer protein (HPt). This multistep phosphorelay consists of a His-Asp-His-Asp sequential transfer of a phosphate group between first a His and an Asp of the HK protein, followed by the transfer to a conserved His of the HPt protein and finally the transfer to an Asp in the receiver domain of the RR protein.

It localises to the nucleus. Functionally, putative transcriptional activator that binds specifically to the DNA sequence 5'-[AG]GATT-3'. Functions as a response regulator involved in His-to-Asp phosphorelay signal transduction system. Phosphorylation of the Asp residue in the receiver domain activates the ability of the protein to promote the transcription of target genes. Could directly activate some type-A response regulators in response to cytokinins. The protein is Putative two-component response regulator ARR13 (ARR13) of Arabidopsis thaliana (Mouse-ear cress).